The following is a 187-amino-acid chain: Probable nicotinate-nucleotide adenylyltransferase (187 aa).

It belongs to the NadD family.

The catalysed reaction is nicotinate beta-D-ribonucleotide + ATP + H(+) = deamido-NAD(+) + diphosphate. Its pathway is cofactor biosynthesis; NAD(+) biosynthesis; deamido-NAD(+) from nicotinate D-ribonucleotide: step 1/1. Its function is as follows. Catalyzes the reversible adenylation of nicotinate mononucleotide (NaMN) to nicotinic acid adenine dinucleotide (NaAD). This Anaeromyxobacter dehalogenans (strain 2CP-1 / ATCC BAA-258) protein is Probable nicotinate-nucleotide adenylyltransferase.